The sequence spans 330 residues: DNA-directed RNA polymerase subunit alpha (330 aa).

Positions 1 to 236 (MQGSVTEFLK…EQLDAFVDLR (236 aa)) are alpha N-terminal domain (alpha-NTD). An alpha C-terminal domain (alpha-CTD) region spans residues 250–330 (FDPILLRPVD…NWPPASIAED (81 aa)).

It belongs to the RNA polymerase alpha chain family. As to quaternary structure, homodimer. The RNAP catalytic core consists of 2 alpha, 1 beta, 1 beta' and 1 omega subunit. When a sigma factor is associated with the core the holoenzyme is formed, which can initiate transcription.

It catalyses the reaction RNA(n) + a ribonucleoside 5'-triphosphate = RNA(n+1) + diphosphate. Its function is as follows. DNA-dependent RNA polymerase catalyzes the transcription of DNA into RNA using the four ribonucleoside triphosphates as substrates. This is DNA-directed RNA polymerase subunit alpha from Vibrio campbellii (strain ATCC BAA-1116).